The sequence spans 422 residues: Adenylosuccinate synthetase (422 aa).

GTP-binding positions include 11–17 (GDEGKGK) and 39–41 (GHT). Catalysis depends on aspartate 12, which acts as the Proton acceptor. Mg(2+)-binding residues include aspartate 12 and glycine 39. IMP is bound by residues 12-15 (DEGK), 37-40 (NAGH), threonine 129, arginine 143, asparagine 219, threonine 234, and arginine 298. The active-site Proton donor is histidine 40. Residue 294–300 (VTTGRRR) coordinates substrate. GTP is bound by residues arginine 300, 326–328 (KLD), and 409–411 (GTG).

Belongs to the adenylosuccinate synthetase family. In terms of assembly, homodimer. It depends on Mg(2+) as a cofactor.

The protein resides in the cytoplasm. The enzyme catalyses IMP + L-aspartate + GTP = N(6)-(1,2-dicarboxyethyl)-AMP + GDP + phosphate + 2 H(+). It participates in purine metabolism; AMP biosynthesis via de novo pathway; AMP from IMP: step 1/2. Plays an important role in the de novo pathway and in the salvage pathway of purine nucleotide biosynthesis. Catalyzes the first committed step in the biosynthesis of AMP from IMP. The sequence is that of Adenylosuccinate synthetase from Ajellomyces capsulatus (strain NAm1 / WU24) (Darling's disease fungus).